The following is a 36-amino-acid chain: Kappa-isophellitoxin-Tst1a (36 aa).

The region spanning 2 to 36 (CENNFSDRECERRKKDCDSSMKFRELSCPKTCGTC) is the ShKT domain. 3 disulfide bridges follow: Cys2–Cys36, Cys11–Cys29, and Cys18–Cys33.

It belongs to the sea anemone type 1 potassium channel toxin family. Type 1a subfamily. In terms of tissue distribution, predominantly expressed in mesenterial filaments (at protein level), a morphological structure that has a functional role in prey killing and digestion. Also expressed in club-tips, tentacles, actinopharynx, body column, mesenterial filaments and pedal disk.

It is found in the secreted. Its subcellular location is the nematocyst. Probable toxin with unknown function. Does not inhibit all channels tested. Is not cytotoxic on macrophage. The chain is Kappa-isophellitoxin-Tst1a from Telmatactis stephensoni (Sea anemone).